The primary structure comprises 224 residues: tRNA (guanine-N(7)-)-methyltransferase (224 aa).

Glu54, Glu79, Glu106, and Asp129 together coordinate S-adenosyl-L-methionine. The active site involves Asp129. Substrate-binding residues include Lys133 and Asp165.

This sequence belongs to the class I-like SAM-binding methyltransferase superfamily. TrmB family.

The enzyme catalyses guanosine(46) in tRNA + S-adenosyl-L-methionine = N(7)-methylguanosine(46) in tRNA + S-adenosyl-L-homocysteine. It functions in the pathway tRNA modification; N(7)-methylguanine-tRNA biosynthesis. Functionally, catalyzes the formation of N(7)-methylguanine at position 46 (m7G46) in tRNA. This is tRNA (guanine-N(7)-)-methyltransferase from Chlamydia muridarum (strain MoPn / Nigg).